Consider the following 470-residue polypeptide: 3-isopropylmalate dehydratase large subunit (470 aa).

3 residues coordinate [4Fe-4S] cluster: C347, C407, and C410.

Belongs to the aconitase/IPM isomerase family. LeuC type 1 subfamily. Heterodimer of LeuC and LeuD. It depends on [4Fe-4S] cluster as a cofactor.

It catalyses the reaction (2R,3S)-3-isopropylmalate = (2S)-2-isopropylmalate. The protein operates within amino-acid biosynthesis; L-leucine biosynthesis; L-leucine from 3-methyl-2-oxobutanoate: step 2/4. Catalyzes the isomerization between 2-isopropylmalate and 3-isopropylmalate, via the formation of 2-isopropylmaleate. This chain is 3-isopropylmalate dehydratase large subunit, found in Shewanella amazonensis (strain ATCC BAA-1098 / SB2B).